We begin with the raw amino-acid sequence, 1335 residues long: Bifunctional autolysin (1335 aa).

Residues methionine 1 to alanine 29 form the signal peptide. Disordered regions lie at residues glutamine 51 to threonine 88, asparagine 100 to glutamate 262, and tryptophan 514 to leucine 535. Polar residues-rich tracts occupy residues glutamate 58–threonine 88, asparagine 100–asparagine 127, threonine 143–alanine 155, threonine 176–glycine 223, and serine 244–tyrosine 258. Positions valine 303–lysine 863 are N-acetylmuramoyl-L-alanine amidase. A compositionally biased stretch (low complexity) spans glycine 515–threonine 531. GW domains are found at residues asparagine 533–alanine 610, alanine 612–lysine 686, threonine 700–alanine 774, serine 776–lysine 850, serine 868–isoleucine 943, lysine 945–threonine 1020, and glutamine 1023–isoleucine 1096. The tract at residues glutamine 864–lysine 1335 is endo-beta-N-acetylglucosaminidase.

The protein in the N-terminal section; belongs to the N-acetylmuramoyl-L-alanine amidase 2 family. This sequence in the C-terminal section; belongs to the glycosyl hydrolase 73 family. In terms of assembly, oligomer; forms a ring structure at the cell surface which is important for efficient partitioning of daughter cells after cell division. In terms of processing, undergoes proteolytic processing to generate the two extracellular lytic enzymes, probably at the septal region on the cell surface.

The protein localises to the secreted. The catalysed reaction is Hydrolyzes the link between N-acetylmuramoyl residues and L-amino acid residues in certain cell-wall glycopeptides.. The enzyme catalyses an N(4)-(oligosaccharide-(1-&gt;3)-[oligosaccharide-(1-&gt;6)]-beta-D-Man-(1-&gt;4)-beta-D-GlcNAc-(1-&gt;4)-alpha-D-GlcNAc)-L-asparaginyl-[protein] + H2O = an oligosaccharide-(1-&gt;3)-[oligosaccharide-(1-&gt;6)]-beta-D-Man-(1-&gt;4)-D-GlcNAc + N(4)-(N-acetyl-beta-D-glucosaminyl)-L-asparaginyl-[protein]. Endohydrolysis of the di-N-acetylchitobiosyl unit in high-mannose glycopeptides and glycoproteins containing the -[(Man)5(GlcNAc)2]-Asn structure. One N-acetyl-D-glucosamine residue remains attached to the protein; the rest of the oligosaccharide is released intact. Cleaves the peptidoglycan connecting the daughter cells at the end of the cell division cycle, resulting in the separation of the two newly divided cells. Acts as an autolysin in penicillin-induced lysis. This is Bifunctional autolysin (atl) from Staphylococcus epidermidis (strain ATCC 12228 / FDA PCI 1200).